A 2278-amino-acid polypeptide reads, in one-letter code: Protein Ycf2 (2278 aa).

Position 1632–1639 (1632–1639) interacts with ATP; the sequence is GSIGTGRS.

The protein belongs to the Ycf2 family.

Its subcellular location is the plastid. The protein localises to the chloroplast stroma. Functionally, probable ATPase of unknown function. Its presence in a non-photosynthetic plant (Epifagus virginiana) and experiments in tobacco indicate that it has an essential function which is probably not related to photosynthesis. The chain is Protein Ycf2 from Solanum tuberosum (Potato).